A 250-amino-acid polypeptide reads, in one-letter code: uncharacterized protein (250 aa).

Residues 1-25 form the signal peptide; sequence MKTLRTLCVLMILSGVIFFGLKIDA.

This is an uncharacterized protein from Bacillus subtilis (strain 168).